The following is a 395-amino-acid chain: Chorismate synthase (395 aa).

Arg-48 lines the NADP(+) pocket. 125–127 (RSS) is an FMN binding site. The segment at 264 to 292 (RNEDWTFDDGESFDHVESEEGDPVPVGND) is disordered. FMN-binding positions include Gly-298, 313–317 (HAPTS), and Arg-340. Residues 373–395 (PDRVDGNPGQYDTDYHPSSPDND) are disordered.

The protein belongs to the chorismate synthase family. FMNH2 serves as cofactor.

It catalyses the reaction 5-O-(1-carboxyvinyl)-3-phosphoshikimate = chorismate + phosphate. It functions in the pathway metabolic intermediate biosynthesis; chorismate biosynthesis; chorismate from D-erythrose 4-phosphate and phosphoenolpyruvate: step 7/7. Catalyzes the anti-1,4-elimination of the C-3 phosphate and the C-6 proR hydrogen from 5-enolpyruvylshikimate-3-phosphate (EPSP) to yield chorismate, which is the branch point compound that serves as the starting substrate for the three terminal pathways of aromatic amino acid biosynthesis. This reaction introduces a second double bond into the aromatic ring system. This is Chorismate synthase from Halorubrum lacusprofundi (strain ATCC 49239 / DSM 5036 / JCM 8891 / ACAM 34).